Consider the following 613-residue polypeptide: Cilia- and flagella-associated protein 100 (613 aa).

Residues 36–55 (KSKESKKNKGNVTISDRSSN) form a disordered region. A compositionally biased stretch (polar residues) spans 45–55 (GNVTISDRSSN). Coiled coils occupy residues 167-198 (ALAM…FLEK), 233-260 (VEIR…KHYK), 396-435 (FTKL…DKEV), and 504-580 (GTVQ…RGRK).

This sequence belongs to the CFAP100 family.

The protein localises to the cytoplasm. It is found in the cytoskeleton. The protein resides in the cilium axoneme. In terms of biological role, may play a role in ciliary/flagellar motility by regulating the assembly and the activity of axonemal inner dynein arm. The polypeptide is Cilia- and flagella-associated protein 100 (Mus musculus (Mouse)).